The primary structure comprises 518 residues: Delta(14)-sterol reductase erg24B (518 aa).

The N-linked (GlcNAc...) asparagine glycan is linked to Asn36. A run of 6 helical transmembrane segments spans residues Val110 to Gly130, Ala150 to Thr170, Tyr182 to Leu202, Ile294 to Ala314, Val321 to Leu341, and Glu355 to Phe375. Residues Lys382, Arg386, Leu409, Trp414, and Asn421–Tyr422 each bind NADP(+). Residues Ser464–Leu484 traverse the membrane as a helical segment. Residues Asp490, Cys494 to Tyr498, and Tyr505 each bind NADP(+).

This sequence belongs to the ERG4/ERG24 family.

It is found in the endoplasmic reticulum membrane. It functions in the pathway steroid metabolism; ergosterol biosynthesis. Its function is as follows. Delta(14)-sterol reductase; part of the third module of ergosterol biosynthesis pathway that includes the late steps of the pathway. Catalyzes the reduction of the C14=C15 double bond within 4,4,24-trimethyl ergosta-8,14,24(28)-trienolto produce 4,4-dimethylfecosterol. The third module or late pathway involves the ergosterol synthesis itself through consecutive reactions that mainly occur in the endoplasmic reticulum (ER) membrane. Firstly, the squalene synthase erg9 catalyzes the condensation of 2 farnesyl pyrophosphate moieties to form squalene, which is the precursor of all steroids. Squalene synthase is crucial for balancing the incorporation of farnesyl diphosphate (FPP) into sterol and nonsterol isoprene synthesis. Secondly, squalene is converted into lanosterol by the consecutive action of the squalene epoxidase erg1 and the lanosterol synthase erg7. Then, the delta(24)-sterol C-methyltransferase erg6 methylates lanosterol at C-24 to produce eburicol. Eburicol is the substrate of the sterol 14-alpha demethylase encoded by cyp51A and cyp51B, to yield 4,4,24-trimethyl ergosta-8,14,24(28)-trienol. The C-14 reductase erg24 then reduces the C14=C15 double bond which leads to 4,4-dimethylfecosterol. A sequence of further demethylations at C-4, involving the C-4 demethylation complex containing the C-4 methylsterol oxidases erg25A or erg25B, the sterol-4-alpha-carboxylate 3-dehydrogenase erg26 and the 3-keto-steroid reductase erg27, leads to the production of fecosterol via 4-methylfecosterol. The C-8 sterol isomerase erg2 then catalyzes the reaction which results in unsaturation at C-7 in the B ring of sterols and thus converts fecosterol to episterol. The sterol-C5-desaturase erg3B then catalyzes the introduction of a C-5 double bond in the B ring to produce 5-dehydroepisterol. The 2 other sterol-C5-desaturases, erg3A and erg3C, seem to be less important in ergosterol biosynthesis. The C-22 sterol desaturase erg5 further converts 5-dehydroepisterol into ergosta-5,7,22,24(28)-tetraen-3beta-ol by forming the C-22(23) double bond in the sterol side chain. Finally, ergosta-5,7,22,24(28)-tetraen-3beta-ol is substrate of the C-24(28) sterol reductases erg4A and erg4B to produce ergosterol. Possible alternative sterol biosynthetic pathways might exist from fecosterol to ergosterol, depending on the activities of the erg3 isoforms. The chain is Delta(14)-sterol reductase erg24B from Aspergillus fumigatus (strain ATCC MYA-4609 / CBS 101355 / FGSC A1100 / Af293) (Neosartorya fumigata).